The chain runs to 246 residues: Isoprenyl transferase (246 aa).

Asp-18 is a catalytic residue. Asp-18 is a Mg(2+) binding site. Substrate contacts are provided by residues 19–22 (GNGR), Trp-23, Arg-31, His-35, and 63–65 (SAE). Asn-66 serves as the catalytic Proton acceptor. Residues Trp-67, Arg-69, Arg-186, and 192–194 (RIS) each bind substrate. Residue Glu-205 participates in Mg(2+) binding.

This sequence belongs to the UPP synthase family. Homodimer. Mg(2+) serves as cofactor.

Functionally, catalyzes the condensation of isopentenyl diphosphate (IPP) with allylic pyrophosphates generating different type of terpenoids. This Geobacter sulfurreducens (strain ATCC 51573 / DSM 12127 / PCA) protein is Isoprenyl transferase.